We begin with the raw amino-acid sequence, 201 residues long: Molybdenum cofactor guanylyltransferase (201 aa).

GTP-binding positions include 15-17, Lys28, Asp74, and Asp104; that span reads LAG. Asp104 is a binding site for Mg(2+).

This sequence belongs to the MobA family. Monomer. Mg(2+) is required as a cofactor.

The protein resides in the cytoplasm. It catalyses the reaction Mo-molybdopterin + GTP + H(+) = Mo-molybdopterin guanine dinucleotide + diphosphate. In terms of biological role, transfers a GMP moiety from GTP to Mo-molybdopterin (Mo-MPT) cofactor (Moco or molybdenum cofactor) to form Mo-molybdopterin guanine dinucleotide (Mo-MGD) cofactor. The sequence is that of Molybdenum cofactor guanylyltransferase from Pseudomonas syringae pv. syringae (strain B728a).